A 149-amino-acid polypeptide reads, in one-letter code: Protein SprT-like (149 aa).

Residues 6–147 form the SprT-like domain; sequence LQALVEQISI…VCGRCRSKLK (142 aa). H67 is a Zn(2+) binding site. E68 is an active-site residue. H71 is a Zn(2+) binding site.

It belongs to the SprT family. Zn(2+) serves as cofactor.

Its subcellular location is the cytoplasm. In Geobacillus kaustophilus (strain HTA426), this protein is Protein SprT-like.